Here is a 194-residue protein sequence, read N- to C-terminus: Large ribosomal subunit protein uL24c (194 aa).

A chloroplast-targeting transit peptide spans 1–50 (MVAMAMASLQSSMSSLSLSSNSFLGQPLSPITLSPFLQGKPTEKKCLIVM).

This sequence belongs to the universal ribosomal protein uL24 family. Part of the 50S ribosomal subunit.

The protein localises to the plastid. Its subcellular location is the chloroplast. One of two assembly initiator proteins, it binds directly to the 5'-end of the 23S rRNA, where it nucleates assembly of the 50S subunit. The protein is Large ribosomal subunit protein uL24c (RPL24) of Pisum sativum (Garden pea).